The following is a 215-amino-acid chain: Probable phosphoglycerate mutase GpmB (215 aa).

Substrate contacts are provided by residues R8–N15, Q21–G22, R58, K60, E82–M85, R104–R105, and G151–I152. H9 (tele-phosphohistidine intermediate) is an active-site residue. Catalysis depends on E82, which acts as the Proton donor/acceptor.

It belongs to the phosphoglycerate mutase family. GpmB subfamily.

The enzyme catalyses (2R)-2-phosphoglycerate = (2R)-3-phosphoglycerate. The protein operates within carbohydrate degradation; glycolysis; pyruvate from D-glyceraldehyde 3-phosphate: step 3/5. The chain is Probable phosphoglycerate mutase GpmB from Salmonella agona (strain SL483).